Reading from the N-terminus, the 365-residue chain is 2-aminoethylphosphonate--pyruvate transaminase (365 aa).

N6-(pyridoxal phosphate)lysine is present on Lys-194.

Belongs to the class-V pyridoxal-phosphate-dependent aminotransferase family. PhnW subfamily. In terms of assembly, homodimer. The cofactor is pyridoxal 5'-phosphate.

The enzyme catalyses (2-aminoethyl)phosphonate + pyruvate = phosphonoacetaldehyde + L-alanine. Its function is as follows. Involved in phosphonate degradation. The protein is 2-aminoethylphosphonate--pyruvate transaminase of Bacillus cereus (strain ATCC 10987 / NRS 248).